A 491-amino-acid polypeptide reads, in one-letter code: Ketol-acid reductoisomerase (NADP(+)) (491 aa).

The region spanning Leu14–Ser208 is the KARI N-terminal Rossmann domain. Residues Cys45–Gln48, Arg68, Arg76, Ser78, and Asp108–Gln110 contribute to the NADP(+) site. His132 is an active-site residue. Gly158 provides a ligand contact to NADP(+). KARI C-terminal knotted domains lie at Ser209–Lys344 and Tyr345–Met485. Positions 217, 221, 389, and 393 each coordinate Mg(2+). Residue Ser414 coordinates substrate.

The protein belongs to the ketol-acid reductoisomerase family. Mg(2+) is required as a cofactor.

It catalyses the reaction (2R)-2,3-dihydroxy-3-methylbutanoate + NADP(+) = (2S)-2-acetolactate + NADPH + H(+). It carries out the reaction (2R,3R)-2,3-dihydroxy-3-methylpentanoate + NADP(+) = (S)-2-ethyl-2-hydroxy-3-oxobutanoate + NADPH + H(+). It functions in the pathway amino-acid biosynthesis; L-isoleucine biosynthesis; L-isoleucine from 2-oxobutanoate: step 2/4. Its pathway is amino-acid biosynthesis; L-valine biosynthesis; L-valine from pyruvate: step 2/4. Its function is as follows. Involved in the biosynthesis of branched-chain amino acids (BCAA). Catalyzes an alkyl-migration followed by a ketol-acid reduction of (S)-2-acetolactate (S2AL) to yield (R)-2,3-dihydroxy-isovalerate. In the isomerase reaction, S2AL is rearranged via a Mg-dependent methyl migration to produce 3-hydroxy-3-methyl-2-ketobutyrate (HMKB). In the reductase reaction, this 2-ketoacid undergoes a metal-dependent reduction by NADPH to yield (R)-2,3-dihydroxy-isovalerate. The chain is Ketol-acid reductoisomerase (NADP(+)) from Pasteurella multocida (strain Pm70).